A 434-amino-acid chain; its full sequence is MSIDIDWERATSGPDGELLAERIRSFIHDKFQQIVLPRFIRSVQVTSFNFGTIPPELEIRDLCDPFPDFYEEDDNENFSESSEEQSPTREPVDRYGSKVESWQANSPGSLEDHMQGRMGFNGPLRMPPGEENTGISPLRSPMNFGDINPYLFPRSRTPGIPGGTSNLGYYMPLSGLSGSQTPLGTVARGSPFSGGWPDVHGARPSRRRSEVEPDSAQSRPSTANTGNTLLSRGSMSSGDPRHSHHSQGVPGSDHGQVLEPNMPPTSSDPPLDDLPPRRMREQKAEDFQVFCRTKYAGNISLSLTAEILLDYPMPSFVGLPLKLNITGLTFDAVAVIAYIRRRIHFCFLSPEDADALIGPEIGSGGGEDTLEPNSPRRKPLSLLREIRVESEIGRKENGKQALKNVGKVEKFVLEQVRRIFEEEFVYPSFWTFLV.

Residues 1–434 (MSIDIDWERA…VYPSFWTFLV (434 aa)) enclose the SMP-LTD domain. Residues 70–83 (YEEDDNENFSESSE) show a composition bias toward acidic residues. Disordered stretches follow at residues 70-141 (YEED…LRSP) and 181-277 (TPLG…LPPR). Over residues 86-97 (SPTREPVDRYGS) the composition is skewed to basic and acidic residues. The span at 215–237 (SAQSRPSTANTGNTLLSRGSMSS) shows a compositional bias: polar residues.

This sequence belongs to the MDM12 family. In terms of assembly, component of the ER-mitochondria encounter structure (ERMES) or MDM complex, composed of MMM1, MDM10, MDM12 and MDM34. An MMM1 homodimer associates with one molecule of MDM12 on each side in a pairwise head-to-tail manner, and the SMP-LTD domains of MMM1 and MDM12 generate a continuous hydrophobic tunnel for phospholipid trafficking.

It localises to the mitochondrion outer membrane. Its subcellular location is the endoplasmic reticulum membrane. Its function is as follows. Component of the ERMES/MDM complex, which serves as a molecular tether to connect the endoplasmic reticulum (ER) and mitochondria. Components of this complex are involved in the control of mitochondrial shape and protein biogenesis, and function in nonvesicular lipid trafficking between the ER and mitochondria. MDM12 is required for the interaction of the ER-resident membrane protein MMM1 and the outer mitochondrial membrane-resident beta-barrel protein MDM10. The MDM12-MMM1 subcomplex functions in the major beta-barrel assembly pathway that is responsible for biogenesis of all mitochondrial outer membrane beta-barrel proteins, and acts in a late step after the SAM complex. The MDM10-MDM12-MMM1 subcomplex further acts in the TOM40-specific pathway after the action of the MDM12-MMM1 complex. Essential for establishing and maintaining the structure of mitochondria and maintenance of mtDNA nucleoids. In Ajellomyces dermatitidis (strain ER-3 / ATCC MYA-2586) (Blastomyces dermatitidis), this protein is Mitochondrial distribution and morphology protein 12.